Reading from the N-terminus, the 152-residue chain is Large ribosomal subunit protein bL9 (152 aa).

The protein belongs to the bacterial ribosomal protein bL9 family.

Binds to the 23S rRNA. The sequence is that of Large ribosomal subunit protein bL9 from Parasynechococcus marenigrum (strain WH8102).